A 2489-amino-acid polypeptide reads, in one-letter code: Protein YPR117W (2489 aa).

A run of 2 helical transmembrane segments spans residues 19–39 (FMLF…WILM) and 128–148 (VLSI…LALT). N-linked (GlcNAc...) asparagine glycans are attached at residues asparagine 191, asparagine 210, asparagine 311, asparagine 452, asparagine 468, asparagine 605, asparagine 638, asparagine 663, asparagine 698, asparagine 789, asparagine 835, asparagine 981, asparagine 1255, asparagine 1404, and asparagine 1476. The stretch at 1610–1676 (LTQEKLATER…RLHTVNTILS (67 aa)) forms a coiled coil. Residues 1685-1704 (PGGNTDGDSSSSLSDTDVNL) form a disordered region. Positions 1690–1704 (DGDSSSSLSDTDVNL) are enriched in low complexity. N-linked (GlcNAc...) asparagine glycosylation is found at asparagine 1978 and asparagine 2189. Phosphoserine is present on residues serine 2254 and serine 2278. Asparagine 2279 carries an N-linked (GlcNAc...) asparagine glycan. Positions 2451–2471 (SSTHSSDIRSINSDETYNEND) are enriched in polar residues. The segment at 2451-2489 (SSTHSSDIRSINSDETYNENDGNGVKPFYPVTSEFSKNK) is disordered.

It localises to the cell membrane. The protein localises to the endoplasmic reticulum membrane. Its subcellular location is the mitochondrion membrane. Functionally, tube-forming lipid transport protein which may bind to phosphatidylinositols and may affect phosphatidylinositol-4,5-bisphosphate (PtdIns-4,5-P2) distribution. The sequence is that of Protein YPR117W from Saccharomyces cerevisiae (strain ATCC 204508 / S288c) (Baker's yeast).